A 191-amino-acid polypeptide reads, in one-letter code: ATP synthase subunit b 1 (191 aa).

A helical transmembrane segment spans residues 7–25 (RMRILCLCATTLLMAGSAL).

Belongs to the ATPase B chain family. In terms of assembly, F-type ATPases have 2 components, F(1) - the catalytic core - and F(0) - the membrane proton channel. F(1) has five subunits: alpha(3), beta(3), gamma(1), delta(1), epsilon(1). F(0) has three main subunits: a(1), b(2) and c(10-14). The alpha and beta chains form an alternating ring which encloses part of the gamma chain. F(1) is attached to F(0) by a central stalk formed by the gamma and epsilon chains, while a peripheral stalk is formed by the delta and b chains.

The protein resides in the cell inner membrane. F(1)F(0) ATP synthase produces ATP from ADP in the presence of a proton or sodium gradient. F-type ATPases consist of two structural domains, F(1) containing the extramembraneous catalytic core and F(0) containing the membrane proton channel, linked together by a central stalk and a peripheral stalk. During catalysis, ATP synthesis in the catalytic domain of F(1) is coupled via a rotary mechanism of the central stalk subunits to proton translocation. Functionally, component of the F(0) channel, it forms part of the peripheral stalk, linking F(1) to F(0). The chain is ATP synthase subunit b 1 from Syntrophotalea carbinolica (strain DSM 2380 / NBRC 103641 / GraBd1) (Pelobacter carbinolicus).